A 227-amino-acid polypeptide reads, in one-letter code: ATP-dependent dethiobiotin synthetase BioD (227 aa).

13 to 18 (NIGKTI) lines the ATP pocket. Threonine 17 provides a ligand contact to Mg(2+). Lysine 38 is an active-site residue. Residue serine 42 participates in substrate binding. Residues aspartate 55, 117–120 (EGFG), 177–178 (NH), 206–208 (PFI), and asparagine 213 contribute to the ATP site. Residues aspartate 55 and glutamate 117 each contribute to the Mg(2+) site.

The protein belongs to the dethiobiotin synthetase family. As to quaternary structure, homodimer. Requires Mg(2+) as cofactor.

It localises to the cytoplasm. It carries out the reaction (7R,8S)-7,8-diammoniononanoate + CO2 + ATP = (4R,5S)-dethiobiotin + ADP + phosphate + 3 H(+). It functions in the pathway cofactor biosynthesis; biotin biosynthesis; biotin from 7,8-diaminononanoate: step 1/2. Catalyzes a mechanistically unusual reaction, the ATP-dependent insertion of CO2 between the N7 and N8 nitrogen atoms of 7,8-diaminopelargonic acid (DAPA, also called 7,8-diammoniononanoate) to form a ureido ring. In Wigglesworthia glossinidia brevipalpis, this protein is ATP-dependent dethiobiotin synthetase BioD.